A 72-amino-acid chain; its full sequence is Small, acid-soluble spore protein 1 (72 aa).

Belongs to the alpha/beta-type SASP family.

In terms of biological role, SASP are bound to spore DNA. They are double-stranded DNA-binding proteins that cause DNA to change to an a-like conformation. They protect the DNA backbone from chemical and enzymatic cleavage and are thus involved in dormant spore's high resistance to UV light. In Halobacillus halophilus (strain ATCC 35676 / DSM 2266 / JCM 20832 / KCTC 3685 / LMG 17431 / NBRC 102448 / NCIMB 2269) (Sporosarcina halophila), this protein is Small, acid-soluble spore protein 1 (Sh-1).